The sequence spans 467 residues: Ribosomal protein uS12 methylthiotransferase RimO (467 aa).

An MTTase N-terminal domain is found at 1–110; that stretch reads MDLHGCAKNQ…LPQLIDSMFP (110 aa). Residues C6, C42, C73, C153, C157, and C160 each coordinate [4Fe-4S] cluster. The Radical SAM core domain maps to 139 to 386; the sequence is LNFPRSTYIK…QNAQTSITEK (248 aa). Residues 389-467 form the TRAM domain; that stretch reads DSFIGKEIEV…NGFDLEAVAV (79 aa).

The protein belongs to the methylthiotransferase family. RimO subfamily. [4Fe-4S] cluster serves as cofactor.

The protein resides in the cytoplasm. It catalyses the reaction L-aspartate(89)-[ribosomal protein uS12]-hydrogen + (sulfur carrier)-SH + AH2 + 2 S-adenosyl-L-methionine = 3-methylsulfanyl-L-aspartate(89)-[ribosomal protein uS12]-hydrogen + (sulfur carrier)-H + 5'-deoxyadenosine + L-methionine + A + S-adenosyl-L-homocysteine + 2 H(+). Catalyzes the methylthiolation of an aspartic acid residue of ribosomal protein uS12. The protein is Ribosomal protein uS12 methylthiotransferase RimO of Treponema denticola (strain ATCC 35405 / DSM 14222 / CIP 103919 / JCM 8153 / KCTC 15104).